The primary structure comprises 200 residues: Lipid A acyltransferase PagP (200 aa).

The N-terminal stretch at 1–24 is a signal peptide; the sequence is MRLKLTSHTCLFALSSLLVTPAFA. Active-site residues include His72, Asp115, and Ser116.

The protein belongs to the lipid A palmitoyltransferase family. In terms of assembly, homodimer.

The protein localises to the cell outer membrane. The enzyme catalyses a lipid A + a 1,2-diacyl-sn-glycero-3-phosphocholine = a hepta-acyl lipid A + a 2-acyl-sn-glycero-3-phosphocholine. It carries out the reaction a lipid IVA + a 1,2-diacyl-sn-glycero-3-phosphocholine = a lipid IVB + a 2-acyl-sn-glycero-3-phosphocholine. The catalysed reaction is a lipid IIA + a 1,2-diacyl-sn-glycero-3-phosphocholine = a lipid IIB + a 2-acyl-sn-glycero-3-phosphocholine. Transfers a fatty acid residue from the sn-1 position of a phospholipid to the N-linked hydroxyfatty acid chain on the proximal unit of lipid A or its precursors. This Dickeya dadantii (strain 3937) (Erwinia chrysanthemi (strain 3937)) protein is Lipid A acyltransferase PagP.